The chain runs to 297 residues: ATP synthase gamma chain (297 aa).

It belongs to the ATPase gamma chain family. F-type ATPases have 2 components, CF(1) - the catalytic core - and CF(0) - the membrane proton channel. CF(1) has five subunits: alpha(3), beta(3), gamma(1), delta(1), epsilon(1). CF(0) has three main subunits: a, b and c.

The protein resides in the cell membrane. In terms of biological role, produces ATP from ADP in the presence of a proton gradient across the membrane. The gamma chain is believed to be important in regulating ATPase activity and the flow of protons through the CF(0) complex. The chain is ATP synthase gamma chain from Arthrobacter sp. (strain FB24).